We begin with the raw amino-acid sequence, 126 residues long: UPF0102 protein DNO_0639 (126 aa).

The protein belongs to the UPF0102 family.

In Dichelobacter nodosus (strain VCS1703A), this protein is UPF0102 protein DNO_0639.